The chain runs to 211 residues: ATP phosphoribosyltransferase (211 aa).

The protein belongs to the ATP phosphoribosyltransferase family. Short subfamily. As to quaternary structure, heteromultimer composed of HisG and HisZ subunits.

The protein localises to the cytoplasm. It carries out the reaction 1-(5-phospho-beta-D-ribosyl)-ATP + diphosphate = 5-phospho-alpha-D-ribose 1-diphosphate + ATP. It participates in amino-acid biosynthesis; L-histidine biosynthesis; L-histidine from 5-phospho-alpha-D-ribose 1-diphosphate: step 1/9. Functionally, catalyzes the condensation of ATP and 5-phosphoribose 1-diphosphate to form N'-(5'-phosphoribosyl)-ATP (PR-ATP). Has a crucial role in the pathway because the rate of histidine biosynthesis seems to be controlled primarily by regulation of HisG enzymatic activity. This Pseudomonas savastanoi pv. phaseolicola (strain 1448A / Race 6) (Pseudomonas syringae pv. phaseolicola (strain 1448A / Race 6)) protein is ATP phosphoribosyltransferase.